The primary structure comprises 118 residues: Small ribosomal subunit protein uS10 (118 aa).

Ser37 bears the Phosphoserine mark.

The protein belongs to the universal ribosomal protein uS10 family. In terms of assembly, component of the small ribosomal subunit (SSU). Mature yeast ribosomes consist of a small (40S) and a large (60S) subunit. The 40S small subunit contains 1 molecule of ribosomal RNA (18S rRNA) and at least 33 different proteins. The large 60S subunit contains 3 rRNA molecules (25S, 5.8S and 5S rRNA) and at least 46 different proteins.

It localises to the cytoplasm. Component of the ribosome, a large ribonucleoprotein complex responsible for the synthesis of proteins in the cell. The small ribosomal subunit (SSU) binds messenger RNAs (mRNAs) and translates the encoded message by selecting cognate aminoacyl-transfer RNA (tRNA) molecules. The large subunit (LSU) contains the ribosomal catalytic site termed the peptidyl transferase center (PTC), which catalyzes the formation of peptide bonds, thereby polymerizing the amino acids delivered by tRNAs into a polypeptide chain. The nascent polypeptides leave the ribosome through a tunnel in the LSU and interact with protein factors that function in enzymatic processing, targeting, and the membrane insertion of nascent chains at the exit of the ribosomal tunnel. The polypeptide is Small ribosomal subunit protein uS10 (rps20) (Schizosaccharomyces pombe (strain 972 / ATCC 24843) (Fission yeast)).